Here is a 341-residue protein sequence, read N- to C-terminus: 3-keto-steroid reductase/17-beta-hydroxysteroid dehydrogenase 7 (341 aa).

Over 1 to 229 (MRKVVLITGA…VACPGTALTN (229 aa)) the chain is Extracellular. 8–15 (TGASSGIG) is a binding site for NAD(+). Asparagine 37 carries N-linked (GlcNAc...) asparagine glycosylation. Serine 171 is a substrate binding site. An N-linked (GlcNAc...) asparagine glycan is attached at asparagine 178. Tyrosine 193 (proton acceptor) is an active-site residue. Asparagine 229 carries N-linked (GlcNAc...) asparagine glycosylation. The chain crosses the membrane as a helical span at residues 230-250 (LTYGILPPFIWTLLMPAILLL). Residues 251-341 (RFFANAFTLT…NQARLSGSCL (91 aa)) lie on the Cytoplasmic side of the membrane.

The protein belongs to the short-chain dehydrogenases/reductases (SDR) family. ERG27 subfamily. As to quaternary structure, binds to the short form of prolactin receptor. Phosphorylated. As to expression, highly expressed in adrenal gland, liver, lung and thymus. Expressed in breast, ovaries, pituitary gland, pregnant uterus, prostate, kidney, lymph node, small intestine, spinal cord and trachea. Weakly expressed in all other tissues tested. Expressed in eye ciliary epithelial cells and neuroendocrine cells.

The protein resides in the endoplasmic reticulum membrane. The enzyme catalyses 17beta-estradiol + NADP(+) = estrone + NADPH + H(+). The catalysed reaction is a 3beta-hydroxysteroid + NADP(+) = a 3-oxosteroid + NADPH + H(+). It catalyses the reaction 3-dehydro-4alpha-methylzymosterol + NADPH + H(+) = 4alpha-methylzymosterol + NADP(+). It carries out the reaction zymosterone + NADPH + H(+) = zymosterol + NADP(+). The enzyme catalyses 4alpha-methyl-5alpha-cholest-8-en-3-one + NADPH + H(+) = 4alpha-methyl-5alpha-cholest-8-en-3beta-ol + NADP(+). The catalysed reaction is 4alpha-methyl-5alpha-cholest-7-en-3beta-ol + NADP(+) = 4alpha-methyl-5alpha-cholest-7-en-3-one + NADPH + H(+). It catalyses the reaction 5alpha-cholest-8-en-3-one + NADPH + H(+) = 5alpha-cholest-8-en-3beta-ol + NADP(+). It carries out the reaction 5alpha-androstane-3beta,17beta-diol + NADP(+) = 17beta-hydroxy-5alpha-androstan-3-one + NADPH + H(+). The enzyme catalyses progesterone + NADPH + H(+) = 3beta-hydroxypregn-4-ene-20-one + NADP(+). Its pathway is steroid biosynthesis; estrogen biosynthesis. It participates in steroid biosynthesis; zymosterol biosynthesis; zymosterol from lanosterol: step 5/6. Estradiol 17-beta-dehydrogenase and dihydrotestosterone oxidoreductase activities are selectively inhibited by 4-methyl-4-aza-5alpha-androstane derivatives, such as 17beta-[(N-Heptyl)methylamino]-4-aza-5r-androstan-3-one and 17beta-(N-Decylformamido)-4-aza-5r-androstan-3-one. Bifunctional enzyme involved in steroid-hormone metabolism and cholesterol biosynthesis. Catalyzes the NADP(H)-dependent reduction of estrogens and androgens and regulates the biological potency of these steroids. Converts estrone (E1) to a more potent estrogen, 17beta-estradiol (E2). Converts dihydrotestosterone (DHT) to its inactive form 5a-androstane-3b,17b-diol. Converts moderately progesterone to 3beta-hydroxypregn-4-ene-20-one, leading to its inactivation. Additionally, participates in the post-squalene cholesterol biosynthesis, as a 3-ketosteroid reductase. Its function is as follows. Does not have enzymatic activities toward E1 and DHT. This chain is 3-keto-steroid reductase/17-beta-hydroxysteroid dehydrogenase 7 (HSD17B7), found in Homo sapiens (Human).